The chain runs to 441 residues: Xylose isomerase (441 aa).

Catalysis depends on residues His-99 and Asp-102. Residues Glu-230, Glu-266, His-269, Asp-294, Asp-305, Asp-307, and Asp-337 each coordinate Mg(2+).

This sequence belongs to the xylose isomerase family. As to quaternary structure, homotetramer. The cofactor is Mg(2+).

The protein localises to the cytoplasm. It carries out the reaction alpha-D-xylose = alpha-D-xylulofuranose. Functionally, exhibits xylose isomerase activity. This is Xylose isomerase (xylA) from Bacillus sp. (strain LW2).